A 504-amino-acid chain; its full sequence is Maturase K (504 aa).

It belongs to the intron maturase 2 family. MatK subfamily.

It is found in the plastid. It localises to the chloroplast. Its function is as follows. Usually encoded in the trnK tRNA gene intron. Probably assists in splicing its own and other chloroplast group II introns. The polypeptide is Maturase K (Adenostoma fasciculatum (Chamise)).